The chain runs to 116 residues: S-adenosylmethionine decarboxylase proenzyme (116 aa).

The active-site Schiff-base intermediate with substrate; via pyruvic acid is the Ser62. A Pyruvic acid (Ser); by autocatalysis modification is found at Ser62. His67 (proton acceptor; for processing activity) is an active-site residue. Cys82 acts as the Proton donor; for catalytic activity in catalysis.

This sequence belongs to the prokaryotic AdoMetDC family. Type 1 subfamily. Heterotetramer of two alpha and two beta chains arranged as a dimer of alpha/beta heterodimers. Requires pyruvate as cofactor. Is synthesized initially as an inactive proenzyme. Formation of the active enzyme involves a self-maturation process in which the active site pyruvoyl group is generated from an internal serine residue via an autocatalytic post-translational modification. Two non-identical subunits are generated from the proenzyme in this reaction, and the pyruvate is formed at the N-terminus of the alpha chain, which is derived from the carboxyl end of the proenzyme. The post-translation cleavage follows an unusual pathway, termed non-hydrolytic serinolysis, in which the side chain hydroxyl group of the serine supplies its oxygen atom to form the C-terminus of the beta chain, while the remainder of the serine residue undergoes an oxidative deamination to produce ammonia and the pyruvoyl group blocking the N-terminus of the alpha chain.

The enzyme catalyses S-adenosyl-L-methionine + H(+) = S-adenosyl 3-(methylsulfanyl)propylamine + CO2. It functions in the pathway amine and polyamine biosynthesis; S-adenosylmethioninamine biosynthesis; S-adenosylmethioninamine from S-adenosyl-L-methionine: step 1/1. Functionally, catalyzes the decarboxylation of S-adenosylmethionine to S-adenosylmethioninamine (dcAdoMet), the propylamine donor required for the synthesis of the polyamines spermine and spermidine from the diamine putrescine. The chain is S-adenosylmethionine decarboxylase proenzyme from Thermomicrobium roseum (strain ATCC 27502 / DSM 5159 / P-2).